The chain runs to 172 residues: Phosphopantetheine adenylyltransferase (172 aa).

Threonine 14 is a substrate binding site. ATP-binding positions include 14-15 (TF) and histidine 22. Substrate is bound by residues lysine 46, leucine 78, and arginine 92. ATP-binding positions include 93 to 95 (GLR), glutamate 103, and 128 to 134 (WLYISST).

Belongs to the bacterial CoaD family. As to quaternary structure, homohexamer. The cofactor is Mg(2+).

The protein resides in the cytoplasm. It carries out the reaction (R)-4'-phosphopantetheine + ATP + H(+) = 3'-dephospho-CoA + diphosphate. It participates in cofactor biosynthesis; coenzyme A biosynthesis; CoA from (R)-pantothenate: step 4/5. Reversibly transfers an adenylyl group from ATP to 4'-phosphopantetheine, yielding dephospho-CoA (dPCoA) and pyrophosphate. In Lawsonia intracellularis (strain PHE/MN1-00), this protein is Phosphopantetheine adenylyltransferase.